Reading from the N-terminus, the 292-residue chain is 5,10-methylenetetrahydrofolate reductase (292 aa).

Glu28 (proton donor/acceptor) is an active-site residue. Thr59 provides a ligand contact to NADH. The FAD site is built by Tyr60, Ala62, His88, Arg118, Gly119, Asp120, Ala132, Tyr152, His156, Asp165, Asn168, Lys171, and Lys172. Asp120 serves as a coordination point for (6S)-5-methyl-5,6,7,8-tetrahydrofolate. Position 183 (Gln183) interacts with NADH. Residue Gln183 participates in (6S)-5-methyl-5,6,7,8-tetrahydrofolate binding.

Belongs to the methylenetetrahydrofolate reductase family. FAD is required as a cofactor.

It catalyses the reaction (6S)-5-methyl-5,6,7,8-tetrahydrofolate + NAD(+) = (6R)-5,10-methylene-5,6,7,8-tetrahydrofolate + NADH + H(+). The protein operates within one-carbon metabolism; tetrahydrofolate interconversion. It functions in the pathway amino-acid biosynthesis; L-methionine biosynthesis via de novo pathway. Its function is as follows. Catalyzes the NADH-dependent reduction of 5,10-methylenetetrahydrofolate to 5-methyltetrahydrofolate. Is required to provide the methyl group necessary for methionine synthetase to convert homocysteine to methionine; the methyl group is given by 5-methyltetrahydrofolate. This chain is 5,10-methylenetetrahydrofolate reductase (metF), found in Buchnera aphidicola subsp. Acyrthosiphon pisum (strain APS) (Acyrthosiphon pisum symbiotic bacterium).